Reading from the N-terminus, the 102-residue chain is Small ribosomal subunit protein uS10 (102 aa).

Belongs to the universal ribosomal protein uS10 family. In terms of assembly, part of the 30S ribosomal subunit.

Involved in the binding of tRNA to the ribosomes. The chain is Small ribosomal subunit protein uS10 from Clostridium acetobutylicum (strain ATCC 824 / DSM 792 / JCM 1419 / IAM 19013 / LMG 5710 / NBRC 13948 / NRRL B-527 / VKM B-1787 / 2291 / W).